The sequence spans 205 residues: Adenylyl-sulfate kinase (205 aa).

31–38 contributes to the ATP binding site; sequence GLSGAGKS. S105 serves as the catalytic Phosphoserine intermediate.

Belongs to the APS kinase family.

The catalysed reaction is adenosine 5'-phosphosulfate + ATP = 3'-phosphoadenylyl sulfate + ADP + H(+). The protein operates within sulfur metabolism; hydrogen sulfide biosynthesis; sulfite from sulfate: step 2/3. In terms of biological role, catalyzes the synthesis of activated sulfate. This chain is Adenylyl-sulfate kinase, found in Shewanella sp. (strain ANA-3).